The primary structure comprises 115 residues: Nucleoid-associated protein tlr0723 (115 aa).

It belongs to the YbaB/EbfC family. Homodimer.

The protein resides in the cytoplasm. The protein localises to the nucleoid. Functionally, binds to DNA and alters its conformation. May be involved in regulation of gene expression, nucleoid organization and DNA protection. The polypeptide is Nucleoid-associated protein tlr0723 (Thermosynechococcus vestitus (strain NIES-2133 / IAM M-273 / BP-1)).